Here is a 274-residue protein sequence, read N- to C-terminus: 4-diphosphocytidyl-2-C-methyl-D-erythritol kinase (274 aa).

Lysine 8 is a catalytic residue. 94 to 104 (PSGAGLGGGSA) contacts ATP. Aspartate 136 is a catalytic residue.

Belongs to the GHMP kinase family. IspE subfamily.

It catalyses the reaction 4-CDP-2-C-methyl-D-erythritol + ATP = 4-CDP-2-C-methyl-D-erythritol 2-phosphate + ADP + H(+). It participates in isoprenoid biosynthesis; isopentenyl diphosphate biosynthesis via DXP pathway; isopentenyl diphosphate from 1-deoxy-D-xylulose 5-phosphate: step 3/6. Catalyzes the phosphorylation of the position 2 hydroxy group of 4-diphosphocytidyl-2C-methyl-D-erythritol. The polypeptide is 4-diphosphocytidyl-2-C-methyl-D-erythritol kinase (Bacteroides fragilis (strain ATCC 25285 / DSM 2151 / CCUG 4856 / JCM 11019 / LMG 10263 / NCTC 9343 / Onslow / VPI 2553 / EN-2)).